The following is a 194-amino-acid chain: MRFCFFFCFTASIFCTTGNSSDIVFCCAHTPCLLHLEVDQETSVTWIDSNTGQIPLCLSNGTCHISEKGLHFSANFSKDGLYIAIINETNYHAAEHYYLVYIYENCHQMPYDSPRHTGHKGTSFNWSMGLWLVKCSHNKTFFLPFVLDSAKSAPIIMTETAITIYISMIFLIVSLLTFLNVLITLNNKYKHYGV.

N-linked (GlcNAc...) asparagine; by host glycans are attached at residues Asn19, Asn60, Asn75, Asn87, Asn125, and Asn138.

The polypeptide is Early E3 22.1 kDa glycoprotein (Canine adenovirus serotype 1 (strain RI261) (CAdV-1)).